The sequence spans 227 residues: Adapter protein MecA 1 (227 aa).

The protein belongs to the MecA family. Homodimer.

Functionally, enables the recognition and targeting of unfolded and aggregated proteins to the ClpC protease or to other proteins involved in proteolysis. Acts negatively in the development of competence by binding ComK and recruiting it to the ClpCP protease. When overexpressed, inhibits sporulation. Also involved in Spx degradation by ClpC. This chain is Adapter protein MecA 1 (mecA1), found in Bacillus cereus (strain ATCC 14579 / DSM 31 / CCUG 7414 / JCM 2152 / NBRC 15305 / NCIMB 9373 / NCTC 2599 / NRRL B-3711).